The chain runs to 4265 residues: Dynein axonemal heavy chain 1 (4265 aa).

Positions 1 to 88 are disordered; that stretch reads MEQPNSKGYS…KSPLTGTDKK (88 aa). Residues 1 to 1542 are stem; it reads MEQPNSKGYS…YIRAVNAEFI (1542 aa). The segment covering 60-69 has biased composition (pro residues); that stretch reads PHLPLPPAPP. AAA stretches follow at residues 1543-1764, 1824-2057, 2189-2449, and 2547-2799; these read YGYE…VISA, EAIR…SSVK, TMVP…VFQG, and DYNQ…LTRH. The GPAGTGKT motif motif lies at 1581 to 1588; that stretch reads GPAGTGKT. 1581 to 1588 contacts ATP; that stretch reads GPAGTGKT. The short motif at 1631–1637 is the CFDEFNR motif element; the sequence is CFDEFNR. ATP is bound by residues 1862–1869, 2227–2234, and 2586–2593; these read GPTGSGKS, GPTGTGKT, and GVGGSGRS. A stalk region spans residues 2814-3112; sequence FSILIGQKKL…EELELKCEQC (299 aa). Positions 3074–3122 form a coiled coil; the sequence is LDEAKQRLREVEDGIATMQAKYRECITKKEELELKCEQCEQRLGRAGKL. AAA stretches follow at residues 3197 to 3427 and 3640 to 3859; these read LGNP…EIQA and MQDF…QLKM.

It belongs to the dynein heavy chain family. As to quaternary structure, consists of at least two heavy chains and a number of intermediate and light chains. Expressed primarily in trachea and testis, 2 tissues containing axonemal structures. Also expressed in brain.

It localises to the cytoplasm. It is found in the cytoskeleton. The protein resides in the cilium axoneme. Its subcellular location is the cell projection. The protein localises to the cilium. It localises to the flagellum. Force generating protein of cilia required for sperm flagellum motility. Produces force towards the minus ends of microtubules. Dynein has ATPase activity; the force-producing power stroke is thought to occur on release of ADP. Required in spermatozoa for the formation of the inner dynein arms and biogenesis of the axoneme. This chain is Dynein axonemal heavy chain 1, found in Homo sapiens (Human).